The sequence spans 354 residues: uncharacterized protein (354 aa).

This sequence belongs to the asfivirus B354L family.

This is an uncharacterized protein from African swine fever virus (isolate Tick/South Africa/Pretoriuskop Pr4/1996) (ASFV).